A 207-amino-acid polypeptide reads, in one-letter code: Small ribosomal subunit protein uS4A (207 aa).

The region spanning 98–163 (TRLDNLVYRL…SPKFKELKEN (66 aa)) is the S4 RNA-binding domain.

This sequence belongs to the universal ribosomal protein uS4 family. Part of the 30S ribosomal subunit. Contacts protein S5. The interaction surface between S4 and S5 is involved in control of translational fidelity.

One of the primary rRNA binding proteins, it binds directly to 16S rRNA where it nucleates assembly of the body of the 30S subunit. Its function is as follows. With S5 and S12 plays an important role in translational accuracy. This chain is Small ribosomal subunit protein uS4A, found in Alkaliphilus metalliredigens (strain QYMF).